The chain runs to 327 residues: uncharacterized protein (327 aa).

The N-terminal stretch at 1-24 (MAMACLCLANISWATVCANSTGVA) is a signal peptide.

This sequence belongs to the fimbrial protein family.

The protein resides in the fimbrium. In terms of biological role, part of the sfmACDHF fimbrial operon. Could contribute to adhesion to various surfaces in specific environmental niches. Increases adhesion to eukaryotic T24 bladder epithelial cells in the absence of fim genes. This is an uncharacterized protein from Escherichia coli (strain K12).